Consider the following 193-residue polypeptide: NADH-quinone oxidoreductase subunit B (193 aa).

Residues cysteine 72, cysteine 73, cysteine 137, and cysteine 167 each contribute to the [4Fe-4S] cluster site.

It belongs to the complex I 20 kDa subunit family. As to quaternary structure, NDH-1 is composed of 14 different subunits. Subunits NuoB, C, D, E, F, and G constitute the peripheral sector of the complex. Requires [4Fe-4S] cluster as cofactor.

It is found in the cell inner membrane. The enzyme catalyses a quinone + NADH + 5 H(+)(in) = a quinol + NAD(+) + 4 H(+)(out). In terms of biological role, NDH-1 shuttles electrons from NADH, via FMN and iron-sulfur (Fe-S) centers, to quinones in the respiratory chain. The immediate electron acceptor for the enzyme in this species is believed to be ubiquinone. Couples the redox reaction to proton translocation (for every two electrons transferred, four hydrogen ions are translocated across the cytoplasmic membrane), and thus conserves the redox energy in a proton gradient. The chain is NADH-quinone oxidoreductase subunit B from Bradyrhizobium sp. (strain ORS 278).